A 502-amino-acid polypeptide reads, in one-letter code: Regulator of hypoxia-inducible factor 1 (502 aa).

Helical transmembrane passes span L54–C74, L92–G112, I138–G158, L188–L208, M241–L261, M272–A292, G335–V355, L367–G387, T396–F416, A437–A457, and L465–I485.

In terms of tissue distribution, expressed in intestine, some sensory neurons in the head, body wall muscles and socket cells.

The protein localises to the endoplasmic reticulum membrane. Involved in the response to variation in environmental oxygen levels by inhibiting hif-1-mediated gene transcription in a vhl-1-independent manner. Plays a role in susceptibility to killing mediated by P.aeruginosa and by pore-forming toxins produced by B.thuringiensis. Probably by preventing hif-1 transcriptional activity, regulates behavioral responses, such as locomotion speed following acute reoxygenation. Plays a role in normal egg-laying probably by regulating spermatogenesis and in body morphogenesis. This Caenorhabditis elegans protein is Regulator of hypoxia-inducible factor 1.